We begin with the raw amino-acid sequence, 1865 residues long: Transient receptor potential cation channel subfamily M member 7 (1865 aa).

Met-1 bears the N-acetylmethionine mark. The Cytoplasmic segment spans residues 1–850 (MSQKSWIEST…ITRKFYAFYH (850 aa)). Ser-101 is modified (phosphoserine). Positions 544 to 555 (NRRSGRNTSSST) are enriched in low complexity. Positions 544–575 (NRRSGRNTSSSTPQLRKSHESFGNRADKKEKM) are disordered. A compositionally biased stretch (basic and acidic residues) spans 560 to 573 (KSHESFGNRADKKE). The helical transmembrane segment at 851-876 (APIVKFWFNTLAYLGFLMLYTFVVLV) threads the bilayer. Over 877–882 (QMEQLP) the chain is Extracellular. A helical transmembrane segment spans residues 883 to 904 (SVQEWIVIAYIFTYAIEKVREI). At 905–923 (FMSEAGKVNQKIKVWFSDY) the chain is on the cytoplasmic side. The helical transmembrane segment at 924–943 (FNISDTIAIISFFIGFGLRF) threads the bilayer. Over 944-956 (GAKWNFANAYDNH) the chain is Extracellular. The chain crosses the membrane as a helical span at residues 957–980 (VFVAGRLIYCLNIIFWYVRLLDFL). The Cytoplasmic segment spans residues 981–999 (AVNQQAGPYVMMIGKMVAN). Residues 1000-1023 (MFYIVVIMALVLLSFGVPRKAILY) traverse the membrane as a helical segment. The Extracellular portion of the chain corresponds to 1024-1025 (PH). The pore-forming intramembrane region spans 1026-1066 (EAPSWTLAKDIVFHPYWMIFGEVYAYEIDVCANDSVIPQIC). The Extracellular portion of the chain corresponds to 1067 to 1069 (GPG). A helical transmembrane segment spans residues 1070–1098 (TWLTPFLQAVYLFVQYIIMVNLLIAFFNN). At 1099 to 1865 (VYLQVKAISN…ESTNSVRLML (767 aa)) the chain is on the cytoplasmic side. S-palmitoyl cysteine attachment occurs at residues Cys-1143, Cys-1144, and Cys-1146. Phosphothreonine; by autocatalysis is present on Thr-1163. Phosphoserine; by autocatalysis occurs at positions 1191 and 1193. Residues 1198 to 1250 (RVTFERVEQMCIQIKEVGDRVNYIKRSLQSLDSQIGHLQDLSALTVDTLKTLT) are a coiled coil. Ser-1224 carries the post-translational modification Phosphoserine. Phosphoserine; by autocatalysis occurs at positions 1255 and 1258. A Phosphothreonine; by autocatalysis modification is found at Thr-1265. Ser-1287 bears the Phosphoserine; by autocatalysis mark. Ser-1301 carries the post-translational modification Phosphoserine. Ser-1358 bears the Phosphoserine; by autocatalysis mark. 2 positions are modified to phosphoserine: Ser-1361 and Ser-1386. Low complexity predominate over residues 1386–1398 (SSSTSIPHLSSPP). The disordered stretch occupies residues 1386 to 1407 (SSSTSIPHLSSPPTKFFVSTPS). 2 positions are modified to phosphoserine; by autocatalysis: Ser-1387 and Ser-1390. 2 positions are modified to phosphoserine: Ser-1395 and Ser-1396. Ser-1404 carries the phosphoserine; by autocatalysis modification. Position 1405 is a phosphothreonine; by autocatalysis (Thr-1405). Ser-1407 is modified (phosphoserine; by autocatalysis). Thr-1435 carries the post-translational modification Phosphothreonine; by autocatalysis. Ser-1446 carries the phosphoserine; by autocatalysis modification. Thr-1455 is modified (phosphothreonine; by autocatalysis). Phosphoserine; by autocatalysis occurs at positions 1456 and 1463. Thr-1467 carries the post-translational modification Phosphothreonine. The residue at position 1468 (Ser-1468) is a Phosphoserine; by autocatalysis. Phosphothreonine; by autocatalysis is present on Thr-1471. 2 positions are modified to phosphoserine; by autocatalysis: Ser-1476 and Ser-1477. Thr-1482 is modified (phosphothreonine; by autocatalysis). The segment at 1492–1511 (HSKQAEKISRRPSTEDTHEV) is disordered. Ser-1493 is modified (phosphoserine; by autocatalysis). Basic and acidic residues predominate over residues 1494-1511 (KQAEKISRRPSTEDTHEV). Ser-1500 bears the Phosphoserine mark. Ser-1504 carries the phosphoserine; by autocatalysis modification. At Thr-1508 the chain carries Phosphothreonine; by autocatalysis. A phosphoserine; by autocatalysis mark is found at Ser-1513, Ser-1527, and Ser-1533. The segment at 1524–1543 (DRPSNREMPSEEGTLNGLTS) is disordered. Phosphothreonine; by autocatalysis occurs at positions 1537 and 1542. Ser-1543 is subject to Phosphoserine; by autocatalysis. A Phosphothreonine; by autocatalysis modification is found at Thr-1551. A phosphoserine; by autocatalysis mark is found at Ser-1567 and Ser-1569. Thr-1583 carries the phosphothreonine; by autocatalysis modification. The Alpha-type protein kinase domain occupies 1594–1824 (ILNNSMSSWS…CCRKLKLPDL (231 aa)). Ser-1598 and Ser-1615 each carry phosphoserine; by autocatalysis. ADP-binding residues include Gly-1621, Gly-1622, Leu-1623, Arg-1624, and Lys-1648. A Phosphoserine; by autocatalysis modification is found at Ser-1660. The residue at position 1685 (Thr-1685) is a Phosphothreonine; by autocatalysis. The ADP site is built by Glu-1720, Glu-1721, and Met-1723. His-1753 contributes to the Zn(2+) binding site. Asp-1767 serves as the catalytic Proton acceptor. Position 1777 (Asp-1777) interacts with ADP. The residue at position 1779 (Ser-1779) is a Phosphoserine; by autocatalysis. His-1810, Cys-1812, and Cys-1816 together coordinate Zn(2+). Thr-1830 bears the Phosphothreonine; by autocatalysis mark. A disordered region spans residues 1836–1865 (FPQDEPSDLNLQPGNSTKESESTNSVRLML). Positions 1844 to 1865 (LNLQPGNSTKESESTNSVRLML) are enriched in polar residues. Ser-1851 bears the Phosphoserine mark. At Ser-1860 the chain carries Phosphoserine; by autocatalysis.

The protein in the C-terminal section; belongs to the protein kinase superfamily. Alpha-type protein kinase family. ALPK subfamily. It in the N-terminal section; belongs to the transient receptor (TC 1.A.4) family. LTrpC subfamily. TRPM7 sub-subfamily. In terms of assembly, homotetramer. Interacts with PLCB1. Forms heteromers with TRPM6; heteromeric channels are functionally different from the homomeric channels. Zn(2+) serves as cofactor. In terms of processing, palmitoylated; palmitoylation at Cys-1143, Cys-1144 and Cys-1146 promotes TRPM7 trafficking from the Golgi to the surface membrane. Autophosphorylated; autophosphorylation of C-terminus regulates TRPM7 kinase activity towards its substrates. Post-translationally, the C-terminal kinase domain can be cleaved from the channel segment in a cell-type-specific fashion. TRPM7 is cleaved by caspase-8, dissociating the kinase from the ion-conducting pore. The cleaved kinase fragments (M7CKs) can translocate to the cell nucleus and binds chromatin-remodeling complex proteins in a Zn(2+)-dependent manner to ultimately phosphorylate specific Ser/Thr residues of histones.

The protein resides in the cell membrane. The protein localises to the cytoplasmic vesicle membrane. Its subcellular location is the nucleus. The catalysed reaction is L-seryl-[protein] + ATP = O-phospho-L-seryl-[protein] + ADP + H(+). The enzyme catalyses L-threonyl-[protein] + ATP = O-phospho-L-threonyl-[protein] + ADP + H(+). It carries out the reaction Mg(2+)(in) = Mg(2+)(out). It catalyses the reaction Ca(2+)(in) = Ca(2+)(out). The catalysed reaction is Zn(2+)(in) = Zn(2+)(out). With respect to regulation, channel displays constitutive activity. Channel activity is negatively regulated by cytosolic Mg(2+) and Mg-ATP. Channel activity is negatively regulated by low intracellular pH. Resting free cytosolic Mg(2+) and Mg-ATP concentrations seem to be sufficient to block native TRPM7 channel activity. TRPM7 channel activity is highly dependent on membrane levels of phosphatidylinositol 4,5 bisphosphate (PIP2). PIP2 hydrolysis negatively regulates TRPM7 channel activity. TRPM7 kinase activity does not affect channel activity. The kinase activity is controlled through the autophosphorylation of a serine/threonine-rich region located N-terminal to the catalytic domain. Bifunctional protein that combines an ion channel with an intrinsic kinase domain, enabling it to modulate cellular functions either by conducting ions through the pore or by phosphorylating downstream proteins via its kinase domain. The channel is highly permeable to divalent cations, specifically calcium (Ca2+), magnesium (Mg2+) and zinc (Zn2+) and mediates their influx. Controls a wide range of biological processes such as Ca2(+), Mg(2+) and Zn(2+) homeostasis, vesicular Zn(2+) release channel and intracellular Ca(2+) signaling, embryonic development, immune responses, cell motility, proliferation and differentiation. The C-terminal alpha-kinase domain autophosphorylates cytoplasmic residues of TRPM7. In vivo, TRPM7 phosphorylates SMAD2, suggesting that TRPM7 kinase may play a role in activating SMAD signaling pathways. In vitro, TRPM7 kinase phosphorylates ANXA1 (annexin A1), myosin II isoforms and a variety of proteins with diverse cellular functions. In terms of biological role, the cleaved channel exhibits substantially higher current and potentiates Fas receptor signaling. Functionally, the C-terminal kinase domain can be cleaved from the channel segment in a cell-type-specific fashion. In immune cells, the TRPM7 kinase domain is clipped from the channel domain by caspases in response to Fas-receptor stimulation. The cleaved kinase fragments can translocate to the nucleus, and bind chromatin-remodeling complex proteins in a Zn(2+)-dependent manner to ultimately phosphorylate specific Ser/Thr residues of histones known to be functionally important for cell differentiation and embryonic development. This Homo sapiens (Human) protein is Transient receptor potential cation channel subfamily M member 7 (TRPM7).